Reading from the N-terminus, the 100-residue chain is Small ribosomal subunit protein uS14 (100 aa).

The protein belongs to the universal ribosomal protein uS14 family. In terms of assembly, part of the 30S ribosomal subunit. Contacts proteins S3 and S10.

Functionally, binds 16S rRNA, required for the assembly of 30S particles and may also be responsible for determining the conformation of the 16S rRNA at the A site. The polypeptide is Small ribosomal subunit protein uS14 (Prochlorococcus marinus (strain MIT 9303)).